We begin with the raw amino-acid sequence, 196 residues long: Adenine phosphoribosyltransferase (196 aa).

It belongs to the purine/pyrimidine phosphoribosyltransferase family. In terms of assembly, homodimer.

The protein localises to the cytoplasm. The catalysed reaction is AMP + diphosphate = 5-phospho-alpha-D-ribose 1-diphosphate + adenine. Its pathway is purine metabolism; AMP biosynthesis via salvage pathway; AMP from adenine: step 1/1. Catalyzes a salvage reaction resulting in the formation of AMP, that is energically less costly than de novo synthesis. The sequence is that of Adenine phosphoribosyltransferase from Methylibium petroleiphilum (strain ATCC BAA-1232 / LMG 22953 / PM1).